Consider the following 435-residue polypeptide: uncharacterized protein (435 aa).

11 consecutive transmembrane segments (helical) span residues 9–29 (IIVL…ITFA), 57–77 (VGLD…GNIM), 110–130 (TLFG…GGIM), 146–166 (AINV…VLIV), 176–196 (VAAL…ALMT), 226–246 (LPSL…VFTP), 280–300 (VVTS…SWAM), 321–341 (WVIL…MDIT), 343–363 (AILI…IDPV), 367–387 (IIMV…TILF), and 408–428 (FLAL…SLLL).

It belongs to the YiaN/YgiK family.

It is found in the cell inner membrane. This is an uncharacterized protein from Salmonella typhimurium (strain LT2 / SGSC1412 / ATCC 700720).